Consider the following 325-residue polypeptide: E3 ubiquitin-protein ligase EL5 (325 aa).

Positions 1–29 (MVRGVEQGGPAMDESSSSSSPSPVSAPAG) are disordered. Residues 15-28 (SSSSSSPSPVSAPA) show a composition bias toward low complexity. Residues 38-58 (IATVAAVLIVFAALTLAFVLL) traverse the membrane as a helical segment. Residues 70 to 105 (TTTSTSGRGRRPRPRRRSGSGGDGGTGGGVDPEVLR) are disordered. Basic residues predominate over residues 77-87 (RGRRPRPRRRS). A compositionally biased stretch (gly residues) spans 88–99 (GSGGDGGTGGGV). Residues 134–176 (CAVCLAELEDGEEARFLPRCGHGFHAECVDMWLGSHSTCPLCR) form an RING-type; atypical zinc finger. Disordered regions lie at residues 267–289 (GAAG…GDVE) and 303–325 (AATP…HVRN). Residues 268 to 281 (AAGSTSSCSCATGG) show a composition bias toward low complexity.

Its subcellular location is the cell membrane. The enzyme catalyses S-ubiquitinyl-[E2 ubiquitin-conjugating enzyme]-L-cysteine + [acceptor protein]-L-lysine = [E2 ubiquitin-conjugating enzyme]-L-cysteine + N(6)-ubiquitinyl-[acceptor protein]-L-lysine.. It participates in protein modification; protein ubiquitination. Functions as an E3 ubiquitin-protein ligase in cooperation with the E2 ubiquitin conjugating enzymes UBC5A and UBC5B. Involved in root development. Required for the maintenance of cell viability after the initiation of root primordial formation. May mediate the degradation of cytotoxic proteins produced in root cells after the actions of auxin, cytokinin and jasmonic acid. Mediates 'Lys-48'-linked polyubiquitination of MBP in vitro. The protein is E3 ubiquitin-protein ligase EL5 (EL5.1) of Oryza sativa subsp. japonica (Rice).